A 236-amino-acid chain; its full sequence is uncharacterized protein (236 aa).

Residues 7-74 (RTNRRDIYLK…PKIGSFVSRV (68 aa)) form the HTH gntR-type domain. The H-T-H motif DNA-binding region spans 34–53 (ENELAASMGVSRTPVRESLI).

This is an uncharacterized protein from Streptomyces ambofaciens.